The primary structure comprises 549 residues: Glucose-6-phosphate isomerase (549 aa).

The Proton donor role is filled by Glu-355. Active-site residues include His-387 and Lys-515.

It belongs to the GPI family.

It localises to the cytoplasm. The catalysed reaction is alpha-D-glucose 6-phosphate = beta-D-fructose 6-phosphate. It participates in carbohydrate biosynthesis; gluconeogenesis. Its pathway is carbohydrate degradation; glycolysis; D-glyceraldehyde 3-phosphate and glycerone phosphate from D-glucose: step 2/4. Functionally, catalyzes the reversible isomerization of glucose-6-phosphate to fructose-6-phosphate. This Haemophilus influenzae (strain 86-028NP) protein is Glucose-6-phosphate isomerase.